The primary structure comprises 1092 residues: Myelin regulatory factor (1092 aa).

Topologically, residues 1-730 (MDVEDENETL…CVSQRFLQAT (730 aa)) are cytoplasmic. Disordered stretches follow at residues 145 to 168 (SYAAGTLPDSPPDSGSEAYSPQQL), 187 to 210 (PPSRLEHPPPPHLQGPLPPHSIHQ), and 258 to 282 (QQHGAELPVHPSKKRKHSDSPTNTL). Over residues 196 to 205 (PPHLQGPLPP) the composition is skewed to pro residues. Residues 246–507 (AQQSQMLHQL…SNPGQFESDS (262 aa)) constitute a DNA-binding region (NDT80). The Peptidase S74 domain maps to 553–662 (SDIRAKESVE…KLTDNLETRI (110 aa)). Residues 646-677 (GAVKELCKLTDNLETRIDELERWSHKLAKLRR) are a coiled coil. Over residues 681–695 (MKSTNSHTGSSQFSR) the composition is skewed to polar residues. Residues 681 to 714 (MKSTNSHTGSSQFSRAGSVPYKQRPPKVMGKTVP) form a disordered region. A helical membrane pass occupies residues 731 to 751 (IIALVIIMAFSVISMTTLYVL). Residues 752–1092 (NLRSEDDMLG…YYFRFYRLCD (341 aa)) are Lumenal-facing. Disordered regions lie at residues 798-817 (TTQLKGNTTPPPKITKSPDW) and 849-945 (ITRK…DSRY). Polar residues-rich tracts occupy residues 849–867 (ITRKTSAASAETISQTDPA) and 928–945 (TPITPMDRTQGNSNDSRY). N-linked (GlcNAc...) asparagine glycans are attached at residues N941, N961, N974, and N996.

This sequence belongs to the MRF family. In terms of assembly, homotrimer. Post-translationally, follows autocatalytic cleavage via the peptidase S74 domain. Autoprocessing is apparently constitutive and is essential for transcriptional activity.

It localises to the endoplasmic reticulum membrane. It is found in the nucleus. The protein localises to the cytoplasm. Constitutes a precursor of the transcription factor. Mediates the autocatalytic cleavage that releases the Myelin regulatory factor, N-terminal component that specifically activates transcription of central nervous system (CNS) myelin genes. In terms of biological role, membrane-bound part that has no transcription factor activity and remains attached to the endoplasmic reticulum membrane following cleavage. Functionally, transcription factor that specifically activates expression of myelin genes during oligodendrocyte (OL) maturation, thereby playing a central role in oligodendrocyte maturation and CNS myelination. This is Myelin regulatory factor (myrf) from Xenopus laevis (African clawed frog).